Consider the following 242-residue polypeptide: Uridylate kinase (242 aa).

ATP is bound at residue 16–19 (KVSG). Residue Gly-58 participates in UMP binding. 2 residues coordinate ATP: Gly-59 and Arg-63. Residues Asp-78 and 139–146 (TGNPFCTT) contribute to the UMP site. Positions 166, 167, 172, and 175 each coordinate ATP.

It belongs to the UMP kinase family. As to quaternary structure, homohexamer.

It localises to the cytoplasm. The catalysed reaction is UMP + ATP = UDP + ADP. It participates in pyrimidine metabolism; CTP biosynthesis via de novo pathway; UDP from UMP (UMPK route): step 1/1. Inhibited by UTP. Catalyzes the reversible phosphorylation of UMP to UDP. The protein is Uridylate kinase of Rickettsia canadensis (strain McKiel).